A 138-amino-acid chain; its full sequence is Molluscan insulin-related peptide 5 (138 aa).

The signal sequence occupies residues Met-1–Gly-31. The residue at position 32 (Gln-32) is a Pyrrolidone carboxylic acid. Intrachain disulfides connect Cys-48/Cys-124, Cys-60/Cys-137, and Cys-123/Cys-128. The propeptide at Asp-72–Val-84 is C-beta peptide like. The propeptide at Asn-87–Thr-111 is C-alpha peptide like. Gln-114 bears the Pyrrolidone carboxylic acid mark.

The protein belongs to the insulin family. As to quaternary structure, heterodimer of a B chain and an A chain linked by two disulfide bonds. In terms of tissue distribution, expressed in the cerebral light-green cells which are giant neuroendocrines cells involved in the control of growth.

Its subcellular location is the cytoplasmic vesicle. It is found in the secretory vesicle. The sequence is that of Molluscan insulin-related peptide 5 from Lymnaea stagnalis (Great pond snail).